The sequence spans 199 residues: Ribosome maturation factor RimM (199 aa).

A PRC barrel domain is found at 95–168 (EDEFYHADLV…FVRVDPVAAG (74 aa)). A disordered region spans residues 167 to 199 (AGLVEDEDGDAPREEDFDPKGRPRGPRDAGGNR). The segment covering 176–193 (DAPREEDFDPKGRPRGPR) has biased composition (basic and acidic residues).

The protein belongs to the RimM family. Binds ribosomal protein uS19.

Its subcellular location is the cytoplasm. An accessory protein needed during the final step in the assembly of 30S ribosomal subunit, possibly for assembly of the head region. Essential for efficient processing of 16S rRNA. May be needed both before and after RbfA during the maturation of 16S rRNA. It has affinity for free ribosomal 30S subunits but not for 70S ribosomes. The chain is Ribosome maturation factor RimM from Mesorhizobium japonicum (strain LMG 29417 / CECT 9101 / MAFF 303099) (Mesorhizobium loti (strain MAFF 303099)).